A 160-amino-acid polypeptide reads, in one-letter code: DNA topoisomerase small subunit (160 aa).

In terms of assembly, part of the DNA topoisomerase complex made of gp39, gp52 and gp60. Requires Mg(2+) as cofactor.

The enzyme catalyses ATP-dependent breakage, passage and rejoining of double-stranded DNA.. In terms of biological role, small subunit of the DNA topoisomerase that untwists superhelical DNA. Controls topological states of double-stranded DNA by transient breakage and subsequent rejoining of DNA strands. The protein is DNA topoisomerase small subunit (60) of Enterobacteria phage T4 (Bacteriophage T4).